The primary structure comprises 153 residues: Large ribosomal subunit protein uL15 (153 aa).

Positions 21 to 41 (RGIGSGKGKTGGRGIKGQKSR) are disordered. Gly residues predominate over residues 23–35 (IGSGKGKTGGRGI).

This sequence belongs to the universal ribosomal protein uL15 family. Part of the 50S ribosomal subunit.

Binds to the 23S rRNA. This chain is Large ribosomal subunit protein uL15, found in Rickettsia rickettsii (strain Iowa).